The chain runs to 91 residues: Small ribosomal subunit protein uS19 (91 aa).

It belongs to the universal ribosomal protein uS19 family.

Its function is as follows. Protein S19 forms a complex with S13 that binds strongly to the 16S ribosomal RNA. The sequence is that of Small ribosomal subunit protein uS19 (rpsS) from Mycoplasmopsis pulmonis (strain UAB CTIP) (Mycoplasma pulmonis).